The chain runs to 358 residues: 3-isopropylmalate dehydrogenase (358 aa).

Residue 79 to 92 (GPKWEHLPPDEQPE) participates in NAD(+) binding. Residues R100, R110, R139, and D227 each contribute to the substrate site. 3 residues coordinate Mg(2+): D227, D251, and D255. Residue 285 to 297 (GSAPDIAGKGVAN) coordinates NAD(+).

The protein belongs to the isocitrate and isopropylmalate dehydrogenases family. LeuB type 1 subfamily. In terms of assembly, homodimer. The cofactor is Mg(2+). Requires Mn(2+) as cofactor.

It is found in the cytoplasm. It catalyses the reaction (2R,3S)-3-isopropylmalate + NAD(+) = 4-methyl-2-oxopentanoate + CO2 + NADH. It participates in amino-acid biosynthesis; L-leucine biosynthesis; L-leucine from 3-methyl-2-oxobutanoate: step 3/4. Catalyzes the oxidation of 3-carboxy-2-hydroxy-4-methylpentanoate (3-isopropylmalate) to 3-carboxy-4-methyl-2-oxopentanoate. The product decarboxylates to 4-methyl-2 oxopentanoate. The protein is 3-isopropylmalate dehydrogenase of Pseudoalteromonas translucida (strain TAC 125).